A 230-amino-acid chain; its full sequence is 2-C-methyl-D-erythritol 4-phosphate cytidylyltransferase (230 aa).

Belongs to the IspD/TarI cytidylyltransferase family. IspD subfamily.

It carries out the reaction 2-C-methyl-D-erythritol 4-phosphate + CTP + H(+) = 4-CDP-2-C-methyl-D-erythritol + diphosphate. It functions in the pathway isoprenoid biosynthesis; isopentenyl diphosphate biosynthesis via DXP pathway; isopentenyl diphosphate from 1-deoxy-D-xylulose 5-phosphate: step 2/6. Its function is as follows. Catalyzes the formation of 4-diphosphocytidyl-2-C-methyl-D-erythritol from CTP and 2-C-methyl-D-erythritol 4-phosphate (MEP). This Synechocystis sp. (strain ATCC 27184 / PCC 6803 / Kazusa) protein is 2-C-methyl-D-erythritol 4-phosphate cytidylyltransferase.